The sequence spans 282 residues: ATP phosphoribosyltransferase (282 aa).

Belongs to the ATP phosphoribosyltransferase family. Long subfamily. Mg(2+) serves as cofactor.

The protein resides in the cytoplasm. It catalyses the reaction 1-(5-phospho-beta-D-ribosyl)-ATP + diphosphate = 5-phospho-alpha-D-ribose 1-diphosphate + ATP. The protein operates within amino-acid biosynthesis; L-histidine biosynthesis; L-histidine from 5-phospho-alpha-D-ribose 1-diphosphate: step 1/9. Feedback inhibited by histidine. Its function is as follows. Catalyzes the condensation of ATP and 5-phosphoribose 1-diphosphate to form N'-(5'-phosphoribosyl)-ATP (PR-ATP). Has a crucial role in the pathway because the rate of histidine biosynthesis seems to be controlled primarily by regulation of HisG enzymatic activity. In Pyrobaculum neutrophilum (strain DSM 2338 / JCM 9278 / NBRC 100436 / V24Sta) (Thermoproteus neutrophilus), this protein is ATP phosphoribosyltransferase.